The primary structure comprises 123 residues: Large ribosomal subunit protein bL19 (123 aa).

The protein belongs to the bacterial ribosomal protein bL19 family.

Its function is as follows. This protein is located at the 30S-50S ribosomal subunit interface and may play a role in the structure and function of the aminoacyl-tRNA binding site. This Thermomicrobium roseum (strain ATCC 27502 / DSM 5159 / P-2) protein is Large ribosomal subunit protein bL19.